The primary structure comprises 153 residues: MKLNELYNNIGAKKNKKRIARGIGSGKGKTGGRGIKGQKSRSGVAVKGFEGGQTPMIKRLPKRGFNCISTKKYNIINIYNIEEALADGRLSADDNITKEKLVEARVVNNKNNKKLVKLLSICSDDFAAPLSLKLDAYSSKAKDLIEKAGGKLL.

The tract at residues 21–42 is disordered; sequence RGIGSGKGKTGGRGIKGQKSRS. The span at 23 to 35 shows a compositional bias: gly residues; sequence IGSGKGKTGGRGI.

The protein belongs to the universal ribosomal protein uL15 family. As to quaternary structure, part of the 50S ribosomal subunit.

Its function is as follows. Binds to the 23S rRNA. This is Large ribosomal subunit protein uL15 from Rickettsia peacockii (strain Rustic).